Consider the following 374-residue polypeptide: MRLDLSAKFRQVLGLAKDHASIGRAIVQNYNEKAFFDIEVAVVRATSHDDCPVDDKTMHEILFLVSNTPGSIPFLAEQISRRLAKTRDCLVAGKTLLLFHRLLRGSSRSIEQQLHIAHTSGHLQIGCSWFMMSLDSRSFVFLQNYVAYLQERVGWIINQAGKLEPVMSGGTKFSRYKEKSMDLVFHILPKCQEFIAQVLKCSPVDAWPIDNLVQAATGNILKESFQVYMTYSDGMTALVSMLFDLSRPARDLACGMLRKASQQIQDLRILYDKCRGFAGMKSLDYPSVQAISMDHIVALEECSSYGGKRGFSLSTNLRDAITCNELKQEQHSASFSSTSPFSLPVETKISMVWVVFDNEDGEESDKQTEKAYER.

The 134-residue stretch at 30–163 (YNEKAFFDIE…GWIINQAGKL (134 aa)) folds into the ENTH domain.

The protein localises to the membrane. Its subcellular location is the clathrin-coated pit. It is found in the golgi apparatus. It localises to the cytoplasmic vesicle. The protein resides in the clathrin-coated vesicle. The chain is Putative clathrin assembly protein At1g33340 from Arabidopsis thaliana (Mouse-ear cress).